A 686-amino-acid polypeptide reads, in one-letter code: MAM domain-containing protein 2 (686 aa).

The N-terminal stretch at 1 to 18 is a signal peptide; the sequence is MLLRGVLLALQALQLAGA. MAM domains lie at 24–169, 168–329, 340–498, and 507–666; these read GSCA…YCIE, IECD…HCQN, ASCN…SCSS, and GECT…PCGE. 2 N-linked (GlcNAc...) asparagine glycosylation sites follow: asparagine 134 and asparagine 329. Disordered regions lie at residues 521-543 and 665-686; these read EKRNRSSWHRRRGETPTSYTGPK and GEMEDTTQQSSGYSEDLNEIEY. Asparagine 524 is a glycosylation site (N-linked (GlcNAc...) asparagine).

Post-translationally, O-glycosylated.

Its subcellular location is the secreted. It localises to the extracellular space. The protein resides in the extracellular matrix. In Homo sapiens (Human), this protein is MAM domain-containing protein 2 (MAMDC2).